The sequence spans 216 residues: DDB1- and CUL4-associated factor 16 (216 aa).

Residues 1-42 (MGPRNPSPDHLSESESEEEENISYLNESSGEEWDSSEEEDSM) are disordered. Over residues 29-41 (SGEEWDSSEEEDS) the composition is skewed to acidic residues. K61 is modified (N6-acetyllysine).

Interacts with DDB1 and CUL4A.

It is found in the nucleus. The protein operates within protein modification; protein ubiquitination. Its function is as follows. Functions as a substrate recognition component for CUL4-DDB1 E3 ubiquitin-protein ligase complex, which mediates ubiquitination and proteasome-dependent degradation of nuclear proteins. The sequence is that of DDB1- and CUL4-associated factor 16 from Homo sapiens (Human).